The following is a 173-amino-acid chain: Skp-like protein (173 aa).

Positions 1–19 (MKKFLLLSLMSLASSTVFA) are cleaved as a signal peptide.

It belongs to the Skp family.

The chain is Skp-like protein from Chlamydia muridarum (strain MoPn / Nigg).